A 188-amino-acid chain; its full sequence is Crossover junction endodeoxyribonuclease RuvC (188 aa).

Active-site residues include Asp7, Glu68, and Asp141. Mg(2+) contacts are provided by Asp7, Glu68, and Asp141.

This sequence belongs to the RuvC family. Homodimer which binds Holliday junction (HJ) DNA. The HJ becomes 2-fold symmetrical on binding to RuvC with unstacked arms; it has a different conformation from HJ DNA in complex with RuvA. In the full resolvosome a probable DNA-RuvA(4)-RuvB(12)-RuvC(2) complex forms which resolves the HJ. It depends on Mg(2+) as a cofactor.

The protein localises to the cytoplasm. The enzyme catalyses Endonucleolytic cleavage at a junction such as a reciprocal single-stranded crossover between two homologous DNA duplexes (Holliday junction).. Its function is as follows. The RuvA-RuvB-RuvC complex processes Holliday junction (HJ) DNA during genetic recombination and DNA repair. Endonuclease that resolves HJ intermediates. Cleaves cruciform DNA by making single-stranded nicks across the HJ at symmetrical positions within the homologous arms, yielding a 5'-phosphate and a 3'-hydroxyl group; requires a central core of homology in the junction. The consensus cleavage sequence is 5'-(A/T)TT(C/G)-3'. Cleavage occurs on the 3'-side of the TT dinucleotide at the point of strand exchange. HJ branch migration catalyzed by RuvA-RuvB allows RuvC to scan DNA until it finds its consensus sequence, where it cleaves and resolves the cruciform DNA. This chain is Crossover junction endodeoxyribonuclease RuvC, found in Mycobacterium tuberculosis (strain ATCC 25177 / H37Ra).